Reading from the N-terminus, the 563-residue chain is Membrane protein insertase YidC (563 aa).

A helical membrane pass occupies residues 6 to 26 (TVLWMIFSFSLLLLWNNWQIH). Residues 36-70 (PAPEAAATQQPKADANGTAASSTASIPSSPAAAPA) are disordered. Low complexity predominate over residues 54–70 (AASSTASIPSSPAAAPA). The next 4 helical transmembrane spans lie at 373–393 (WGWT…PLAA), 443–463 (LPMV…LASV), 482–502 (PFFI…KLNP), and 512–532 (VMMI…AGLV).

The protein belongs to the OXA1/ALB3/YidC family. Type 1 subfamily. As to quaternary structure, interacts with the Sec translocase complex via SecD. Specifically interacts with transmembrane segments of nascent integral membrane proteins during membrane integration.

Its subcellular location is the cell inner membrane. Its function is as follows. Required for the insertion and/or proper folding and/or complex formation of integral membrane proteins into the membrane. Involved in integration of membrane proteins that insert both dependently and independently of the Sec translocase complex, as well as at least some lipoproteins. Aids folding of multispanning membrane proteins. The sequence is that of Membrane protein insertase YidC from Bordetella parapertussis (strain 12822 / ATCC BAA-587 / NCTC 13253).